Here is a 473-residue protein sequence, read N- to C-terminus: H(+)/Cl(-) exchange transporter ClcA (473 aa).

Over 1 to 32 the chain is Cytoplasmic; it reads MKTDTPSLETPQAARLRRRQLIRQLLERDKTP. The helical transmembrane segment at 33–69 threads the bilayer; that stretch reads LAILFMAAVVGTLVGLAAVAFDKGVAWLQNQRMGALV. Residues 70–76 are Periplasmic-facing; that stretch reads HTADNYP. A helical membrane pass occupies residues 77–100; sequence LLLTVAFLCSAVLAMFGYFLVRKY. Residues 106–110 carry the Selectivity filter part_1 motif; the sequence is GSGIP. Chloride is bound at residue Ser107. Residues 109–116 constitute an intramembrane region (helical); that stretch reads IPEIEGAL. Topologically, residues 117-123 are cytoplasmic; that stretch reads EDQRPVR. The next 2 helical transmembrane spans lie at 124 to 141 and 148 to 166; these read WWRV…TLGG and EGPT…LDIF. The Selectivity filter part_2 signature appears at 146 to 150; that stretch reads GREGP. The Cytoplasmic portion of the chain corresponds to 167-176; sequence RLKGDEARHT. 2 consecutive intramembrane regions (helical) follow at residues 177–189 and 193–201; these read LLAT…LAAA and PLAGILFII. Topologically, residues 202–214 are cytoplasmic; the sequence is EEMRPQFRYTLIS. Residues 215–232 traverse the membrane as a helical segment; it reads IKAVFIGVIMSTIMYRIF. The Periplasmic portion of the chain corresponds to 233–252; it reads NHEVALIDVGKLSDAPLNTL. The helical transmembrane segment at 253–281 threads the bilayer; it reads WLYLILGIIFGIFGPIFNKWVLGMQDLLH. Topologically, residues 282–287 are cytoplasmic; that stretch reads RVHGGN. Residues 288-309 form a helical membrane-spanning segment; it reads ITKWVLMGGAIGGLCGLLGFVA. Topologically, residues 310–329 are periplasmic; the sequence is PATSGGGFNLIPIATAGNFS. 2 consecutive transmembrane segments (helical) span residues 330-349 and 355-376; these read MGML…LCFS and GIFA…MVAV. A Selectivity filter part_3 motif is present at residues 355 to 359; that stretch reads GIFAP. Chloride is bound by residues Ile356 and Phe357. Over 377–386 the chain is Periplasmic; the sequence is ELFPQYHLEA. An intramembrane region (helical) is located at residues 387 to 401; that stretch reads GTFAIAGMGALLAAS. The note=Loop between two helices intramembrane region spans 402–404; it reads IRA. Positions 405-416 form an intramembrane region, helical; the sequence is PLTGIILVLEMT. The note=Loop between two helices intramembrane region spans 417 to 421; the sequence is DNYQL. A helical transmembrane segment spans residues 422–438; it reads ILPMIITGLGATLLAQF. The Cytoplasmic segment spans residues 439-473; sequence TGGKPLYSAILARTLAKQEAEQLARSKAASASENT. Tyr445 serves as a coordination point for chloride.

Belongs to the chloride channel (TC 2.A.49) family. ClcA subfamily. As to quaternary structure, homodimer.

Its subcellular location is the cell inner membrane. It carries out the reaction 2 chloride(in) + H(+)(out) = 2 chloride(out) + H(+)(in). Its function is as follows. Proton-coupled chloride transporter. Functions as antiport system and exchanges two chloride ions for 1 proton. Probably acts as an electrical shunt for an outwardly-directed proton pump that is linked to amino acid decarboxylation, as part of the extreme acid resistance (XAR) response. The protein is H(+)/Cl(-) exchange transporter ClcA of Escherichia coli O139:H28 (strain E24377A / ETEC).